The chain runs to 154 residues: 17.7 kDa class I heat shock protein (154 aa).

The region spanning 40–154 (ETSAFANTRI…PDVKSIEISG (115 aa)) is the sHSP domain.

Belongs to the small heat shock protein (HSP20) family. In terms of assembly, forms oligomeric structures.

It is found in the cytoplasm. This Solanum peruvianum (Peruvian tomato) protein is 17.7 kDa class I heat shock protein.